Consider the following 676-residue polypeptide: Protein kinase C delta type (676 aa).

The 106-residue stretch at 1 to 106 (MAPFLRIAFN…KNNGKAEFWL (106 aa)) folds into the C2 domain. Phosphothreonine is present on residues threonine 43 and threonine 50. At tyrosine 64 the chain carries Phosphotyrosine. Serine 130 is modified (phosphoserine). A Phosphothreonine modification is found at threonine 141. Tyrosine 155 bears the Phosphotyrosine mark. The Phorbol-ester/DAG-type 1 zinc-finger motif lies at 158–208 (NHEFIATFFGQPTFCSVCKDFVWGLNKQGYKCRQCNAAIHKKCIDKIIGRC). A Phosphothreonine modification is found at threonine 218. A Phorbol-ester/DAG-type 2 zinc finger spans residues 230 to 280 (PHRFKVHNYMSPTFCDHCGSLLWGLVKQGLKCEDCGMNVHHKCREKVANLC). Residues serine 299, serine 302, and serine 304 each carry the phosphoserine; by autocatalysis modification. Serine 307 carries the post-translational modification Phosphoserine. Tyrosine 313 bears the Phosphotyrosine mark. Tyrosine 334 carries the phosphotyrosine; by SRC modification. In terms of domain architecture, Protein kinase spans 349 to 603 (FIFHKVLGKG…TGNIKIHPFF (255 aa)). 355-363 (LGKGSFGKV) serves as a coordination point for ATP. Tyrosine 374 bears the Phosphotyrosine mark. Lysine 378 lines the ATP pocket. The residue at position 451 (threonine 451) is a Phosphothreonine. Aspartate 473 serves as the catalytic Proton acceptor. Phosphoserine is present on residues serine 503 and serine 506. At threonine 507 the chain carries Phosphothreonine; by autocatalysis. The residue at position 567 (tyrosine 567) is a Phosphotyrosine. One can recognise an AGC-kinase C-terminal domain in the interval 604–675 (KTINWTLLEK…VNPKFEHLLE (72 aa)). A phosphoserine mark is found at serine 645, serine 654, serine 658, and serine 664.

The protein belongs to the protein kinase superfamily. AGC Ser/Thr protein kinase family. PKC subfamily. As to quaternary structure, interacts with PDPK1 (via N-terminal region). Interacts with RAD9A. Interacts with CDCP1. Interacts with MUC1. Interacts with VASP. Interacts with CAVIN3. Interacts with PRKD2 (via N-terminus and zing-finger domain 1 and 2) in response to oxidative stress; the interaction is independent of PRKD2 tyrosine phosphorylation. Interacts with PLSC3; interaction is enhanced by UV irradiation. Interacts with PRKCH upstream open reading frame 2; the interaction leads to inhibition of kinase activity. Autophosphorylated and/or phosphorylated at Thr-507, within the activation loop; phosphorylation at Thr-507 is not a prerequisite for enzymatic activity. Autophosphorylated at Ser-299, Ser-302 and Ser-304. Upon TNFSF10/TRAIL treatment, phosphorylated at Tyr-155; phosphorylation is required for its translocation to the endoplasmic reticulum and cleavage by caspase-3. Phosphorylated at Tyr-313, Tyr-334 and Tyr-567; phosphorylation of Tyr-313 and Tyr-567 following thrombin or zymosan stimulation potentiates its kinase activity. Phosphorylated by protein kinase PDPK1; phosphorylation is inhibited by the apoptotic C-terminal cleavage product of PKN2. Phosphorylated at Tyr-313 through a SYK and SRC mechanism downstream of C-type lectin receptors activation, promoting its activation. Post-translationally, proteolytically cleaved into a catalytic subunit and a regulatory subunit by caspase-3 during apoptosis which results in kinase activation.

Its subcellular location is the cytoplasm. It is found in the perinuclear region. The protein localises to the nucleus. It localises to the cell membrane. The protein resides in the mitochondrion. Its subcellular location is the endomembrane system. It catalyses the reaction L-seryl-[protein] + ATP = O-phospho-L-seryl-[protein] + ADP + H(+). It carries out the reaction L-threonyl-[protein] + ATP = O-phospho-L-threonyl-[protein] + ADP + H(+). The enzyme catalyses L-tyrosyl-[protein] + ATP = O-phospho-L-tyrosyl-[protein] + ADP + H(+). With respect to regulation, novel PKCs (PRKCD, PRKCE, PRKCH and PRKCQ) are calcium-insensitive, but activated by diacylglycerol (DAG) and phosphatidylserine. Three specific sites; Thr-507 (activation loop of the kinase domain), Ser-645 (turn motif) and Ser-664 (hydrophobic region), need to be phosphorylated for its full activation. Activated by caspase-3 (CASP3) cleavage during apoptosis. After cleavage, the pseudosubstrate motif in the regulatory subunit is released from the substrate recognition site of the catalytic subunit, which enables PRKCD to become constitutively activated. The catalytic subunit which displays properties of a sphingosine-dependent protein kinase is activated by D-erythro-sphingosine (Sph) or N,N-dimethyl-D-erythrosphingosine (DMS) or N,N,N-trimethyl-D-erythrosphingosine (TMS), but not by ceramide or Sph-1-P and is strongly inhibited by phosphatidylserine. Inhibited by PRKCH upstream open reading frame 2. Its function is as follows. Calcium-independent, phospholipid- and diacylglycerol (DAG)-dependent serine/threonine-protein kinase that plays contrasting roles in cell death and cell survival by functioning as a pro-apoptotic protein during DNA damage-induced apoptosis, but acting as an anti-apoptotic protein during cytokine receptor-initiated cell death, is involved in tumor suppression as well as survival of several cancers, is required for oxygen radical production by NADPH oxidase and acts as positive or negative regulator in platelet functional responses. Negatively regulates B cell proliferation and also has an important function in self-antigen induced B cell tolerance induction. Upon DNA damage, activates the promoter of the death-promoting transcription factor BCLAF1/Btf to trigger BCLAF1-mediated p53/TP53 gene transcription and apoptosis. In response to oxidative stress, interact with and activate CHUK/IKKA in the nucleus, causing the phosphorylation of p53/TP53. In the case of ER stress or DNA damage-induced apoptosis, can form a complex with the tyrosine-protein kinase ABL1 which trigger apoptosis independently of p53/TP53. In cytosol can trigger apoptosis by activating MAPK11 or MAPK14, inhibiting AKT1 and decreasing the level of X-linked inhibitor of apoptosis protein (XIAP), whereas in nucleus induces apoptosis via the activation of MAPK8 or MAPK9. Upon ionizing radiation treatment, is required for the activation of the apoptosis regulators BAX and BAK, which trigger the mitochondrial cell death pathway. Can phosphorylate MCL1 and target it for degradation which is sufficient to trigger for BAX activation and apoptosis. Is required for the control of cell cycle progression both at G1/S and G2/M phases. Mediates phorbol 12-myristate 13-acetate (PMA)-induced inhibition of cell cycle progression at G1/S phase by up-regulating the CDK inhibitor CDKN1A/p21 and inhibiting the cyclin CCNA2 promoter activity. In response to UV irradiation can phosphorylate CDK1, which is important for the G2/M DNA damage checkpoint activation. Can protect glioma cells from the apoptosis induced by TNFSF10/TRAIL, probably by inducing increased phosphorylation and subsequent activation of AKT1. Is highly expressed in a number of cancer cells and promotes cell survival and resistance against chemotherapeutic drugs by inducing cyclin D1 (CCND1) and hyperphosphorylation of RB1, and via several pro-survival pathways, including NF-kappa-B, AKT1 and MAPK1/3 (ERK1/2). Involved in antifungal immunity by mediating phosphorylation and activation of CARD9 downstream of C-type lectin receptors activation, promoting interaction between CARD9 and BCL10, followed by activation of NF-kappa-B and MAP kinase p38 pathways. Can also act as tumor suppressor upon mitogenic stimulation with PMA or TPA. In N-formyl-methionyl-leucyl-phenylalanine (fMLP)-treated cells, is required for NCF1 (p47-phox) phosphorylation and activation of NADPH oxidase activity, and regulates TNF-elicited superoxide anion production in neutrophils, by direct phosphorylation and activation of NCF1 or indirectly through MAPK1/3 (ERK1/2) signaling pathways. May also play a role in the regulation of NADPH oxidase activity in eosinophil after stimulation with IL5, leukotriene B4 or PMA. In collagen-induced platelet aggregation, acts a negative regulator of filopodia formation and actin polymerization by interacting with and negatively regulating VASP phosphorylation. Downstream of PAR1, PAR4 and CD36/GP4 receptors, regulates differentially platelet dense granule secretion; acts as a positive regulator in PAR-mediated granule secretion, whereas it negatively regulates CD36/GP4-mediated granule release. Phosphorylates MUC1 in the C-terminal and regulates the interaction between MUC1 and beta-catenin. The catalytic subunit phosphorylates 14-3-3 proteins (YWHAB, YWHAZ and YWHAH) in a sphingosine-dependent fashion. Phosphorylates ELAVL1 in response to angiotensin-2 treatment. Phosphorylates mitochondrial phospholipid scramblase 3 (PLSCR3), resulting in increased cardiolipin expression on the mitochondrial outer membrane which facilitates apoptosis. Phosphorylates SMPD1 which induces SMPD1 secretion. This Homo sapiens (Human) protein is Protein kinase C delta type.